A 147-amino-acid polypeptide reads, in one-letter code: MYWQNWTHNGRLWGAGVHLYLSRKQCALKNTSLSKFQTSHICKGSALQPQQASPGASSFLTCPELGVMYLKLVLGQMVQAVRRDSGLQPFGSLFLLITQKRAVLTPFLTKTWHSLRALVYRVWSLEESRYLQREKGLVDSFGVLWEE.

This is an uncharacterized protein from Homo sapiens (Human).